The following is a 278-amino-acid chain: Sulfur carrier protein FdhD (278 aa).

The active-site Cysteine persulfide intermediate is Cys121. 260-265 lines the Mo-bis(molybdopterin guanine dinucleotide) pocket; that stretch reads FCKPGR.

The protein belongs to the FdhD family.

It localises to the cytoplasm. Functionally, required for formate dehydrogenase (FDH) activity. Acts as a sulfur carrier protein that transfers sulfur from IscS to the molybdenum cofactor prior to its insertion into FDH. The sequence is that of Sulfur carrier protein FdhD from Salmonella newport (strain SL254).